Here is a 150-residue protein sequence, read N- to C-terminus: SsrA-binding protein (150 aa).

Belongs to the SmpB family.

The protein resides in the cytoplasm. Required for rescue of stalled ribosomes mediated by trans-translation. Binds to transfer-messenger RNA (tmRNA), required for stable association of tmRNA with ribosomes. tmRNA and SmpB together mimic tRNA shape, replacing the anticodon stem-loop with SmpB. tmRNA is encoded by the ssrA gene; the 2 termini fold to resemble tRNA(Ala) and it encodes a 'tag peptide', a short internal open reading frame. During trans-translation Ala-aminoacylated tmRNA acts like a tRNA, entering the A-site of stalled ribosomes, displacing the stalled mRNA. The ribosome then switches to translate the ORF on the tmRNA; the nascent peptide is terminated with the 'tag peptide' encoded by the tmRNA and targeted for degradation. The ribosome is freed to recommence translation, which seems to be the essential function of trans-translation. The polypeptide is SsrA-binding protein (Borrelia garinii subsp. bavariensis (strain ATCC BAA-2496 / DSM 23469 / PBi) (Borreliella bavariensis)).